Here is a 275-residue protein sequence, read N- to C-terminus: NH(3)-dependent NAD(+) synthetase (275 aa).

Residue 43-50 coordinates ATP; it reads GISGGVDS. Aspartate 49 serves as a coordination point for Mg(2+). Position 145 (arginine 145) interacts with deamido-NAD(+). Threonine 165 serves as a coordination point for ATP. Mg(2+) is bound at residue glutamate 170. Residues lysine 178 and aspartate 185 each coordinate deamido-NAD(+). The ATP site is built by lysine 194 and threonine 216. 265 to 266 is a binding site for deamido-NAD(+); the sequence is HK.

The protein belongs to the NAD synthetase family. In terms of assembly, homodimer.

It catalyses the reaction deamido-NAD(+) + NH4(+) + ATP = AMP + diphosphate + NAD(+) + H(+). It functions in the pathway cofactor biosynthesis; NAD(+) biosynthesis; NAD(+) from deamido-NAD(+) (ammonia route): step 1/1. Catalyzes the ATP-dependent amidation of deamido-NAD to form NAD. Uses ammonia as a nitrogen source. This chain is NH(3)-dependent NAD(+) synthetase, found in Shewanella denitrificans (strain OS217 / ATCC BAA-1090 / DSM 15013).